The sequence spans 429 residues: 3-phosphoshikimate 1-carboxyvinyltransferase (429 aa).

K23, S24, and R28 together coordinate 3-phosphoshikimate. K23 lines the phosphoenolpyruvate pocket. Positions 95 and 123 each coordinate phosphoenolpyruvate. Residues S168, Q170, D316, and K343 each coordinate 3-phosphoshikimate. Q170 provides a ligand contact to phosphoenolpyruvate. D316 functions as the Proton acceptor in the catalytic mechanism. Residues R347 and R389 each contribute to the phosphoenolpyruvate site.

Belongs to the EPSP synthase family. Monomer.

Its subcellular location is the cytoplasm. It catalyses the reaction 3-phosphoshikimate + phosphoenolpyruvate = 5-O-(1-carboxyvinyl)-3-phosphoshikimate + phosphate. The protein operates within metabolic intermediate biosynthesis; chorismate biosynthesis; chorismate from D-erythrose 4-phosphate and phosphoenolpyruvate: step 6/7. Catalyzes the transfer of the enolpyruvyl moiety of phosphoenolpyruvate (PEP) to the 5-hydroxyl of shikimate-3-phosphate (S3P) to produce enolpyruvyl shikimate-3-phosphate and inorganic phosphate. This Oceanobacillus iheyensis (strain DSM 14371 / CIP 107618 / JCM 11309 / KCTC 3954 / HTE831) protein is 3-phosphoshikimate 1-carboxyvinyltransferase.